The following is a 366-amino-acid chain: Putative F-box protein At1g26515 (366 aa).

The disordered stretch occupies residues 1-20; sequence MKTRSKKTKTENNQEKSKEK. The segment covering 8–20 has biased composition (basic and acidic residues); that stretch reads TKTENNQEKSKEK. The 47-residue stretch at 20 to 66 folds into the F-box domain; it reads KNKFDQLPLDLEIEIFRRLPLKSVARFLTLSKSCAATIRSPSFITSF.

This is Putative F-box protein At1g26515 from Arabidopsis thaliana (Mouse-ear cress).